The chain runs to 1103 residues: A disintegrin and metalloproteinase with thrombospondin motifs 10 (1103 aa).

An N-terminal signal peptide occupies residues 1–25 (MAPACQILRWALALGLGLMFEVTHA). Residues 26–233 (FRSQDEFLSS…TERGQPGLKR (208 aa)) constitute a propeptide that is removed on maturation. 3 N-linked (GlcNAc...) asparagine glycosylation sites follow: asparagine 90, asparagine 222, and asparagine 323. Positions 213 to 233 (KPPPARPLGNETERGQPGLKR) are disordered. A Peptidase M12B domain is found at 239 to 457 (RYVETLVVAD…GLGLCLNNRP (219 aa)). Cystine bridges form between cysteine 315-cysteine 376, cysteine 351-cysteine 358, cysteine 370-cysteine 452, cysteine 409-cysteine 436, cysteine 479-cysteine 501, cysteine 490-cysteine 508, cysteine 496-cysteine 531, cysteine 521-cysteine 536, cysteine 559-cysteine 596, cysteine 563-cysteine 601, and cysteine 574-cysteine 586. Histidine 392 provides a ligand contact to Zn(2+). Residue glutamate 393 is part of the active site. Residues histidine 396 and histidine 402 each contribute to the Zn(2+) site. The region spanning 460 to 546 (QDFVYPTVAP…VPFGSRPEGV (87 aa)) is the Disintegrin domain. One can recognise a TSP type-1 1 domain in the interval 547 to 602 (DGAWGPWTPWGDCSRTCGGGVSSSSRHCDSPRPTIGGKYCLGERRRHRSCNTDDCP). Positions 706-828 (ETIEGVFSPA…IARDSLPPYS (123 aa)) are spacer. Asparagine 740 and asparagine 795 each carry an N-linked (GlcNAc...) asparagine glycan. TSP type-1 domains lie at 825–883 (PPYS…NTEP), 884–945 (CPPD…PTCP), 947–1001 (EWAA…NLRR), and 1003–1058 (PPAR…AKCD). Asparagine 892 carries N-linked (GlcNAc...) asparagine glycosylation. The 39-residue stretch at 1065–1103 (GPEECKDVNKVAYCPLVLKFQFCSRAYFRQMCCKTCHGH) folds into the PLAC domain.

Interacts with FBN1; this interaction promotes microfibrils assembly. Requires Zn(2+) as cofactor. In terms of processing, glycosylated. Can be O-fucosylated by POFUT2 on a serine or a threonine residue found within the consensus sequence C1-X(2)-(S/T)-C2-G of the TSP type-1 repeat domains where C1 and C2 are the first and second cysteine residue of the repeat, respectively. Fucosylated repeats can then be further glycosylated by the addition of a beta-1,3-glucose residue by the glucosyltransferase, B3GALTL. Fucosylation mediates the efficient secretion of ADAMTS family members. Can also be C-glycosylated with one or two mannose molecules on tryptophan residues within the consensus sequence W-X-X-W of the TPRs, and N-glycosylated. These other glycosylations can also facilitate secretion. As to expression, widely expressed in adult tissues.

The protein localises to the secreted. The protein resides in the extracellular space. It localises to the extracellular matrix. Metalloprotease that participate in microfibrils assembly. Microfibrils are extracellular matrix components occurring independently or along with elastin in the formation of elastic tissues. In Homo sapiens (Human), this protein is A disintegrin and metalloproteinase with thrombospondin motifs 10 (ADAMTS10).